We begin with the raw amino-acid sequence, 486 residues long: Histamine H1 receptor (486 aa).

Residues 1–29 (MSFANTSSTFEDKMCEGNRTAMASPQLLP) are Extracellular-facing. N-linked (GlcNAc...) asparagine glycans are attached at residues N5 and N18. The helical transmembrane segment at 30–50 (LVVVLSSISLVTVGLNLLVLY) threads the bilayer. The Cytoplasmic portion of the chain corresponds to 51–64 (AVHSERKLHTVGNL). Residues 65 to 89 (YIVSLSVADLIVGAVVMPMNILYLI) form a helical membrane-spanning segment. Residues 90–97 (MTKWSLGR) are Extracellular-facing. The helical transmembrane segment at 98–123 (PLCLFWLSMDYVASTASIFSVFILCI) threads the bilayer. A disulfide bridge links C100 with C180. D107 and T112 together coordinate histamine. The segment at 107 to 112 (DYVAST) is important for agonist binding. Residues 124–144 (DRYRSVQQPLRYLRYRTKTRA) lie on the Cytoplasmic side of the membrane. T140 and T142 each carry phosphothreonine. A helical membrane pass occupies residues 145–164 (SATILGAWFFSFLWVIPILG). The Extracellular segment spans residues 165–188 (WHHFMPPAPELREDKCETDFYNVT). A helical membrane pass occupies residues 189–211 (WFKIMTAIINFYLPTLLMLWFYV). Residue N198 coordinates histamine. At 212–415 (KIYKAVRRHC…LNRERKAAKQ (204 aa)) the chain is on the cytoplasmic side. S230 is modified (phosphoserine). Basic and acidic residues predominate over residues 241–253 (SDDTKEGAKKPGR). 2 disordered regions span residues 241 to 295 (SDDT…GERE) and 310 to 379 (VAEG…RSGS). Phosphoserine is present on residues S342 and S345. The segment covering 347-365 (DQTLVDQQSFSRTTDSDTS) has biased composition (polar residues). S379, S381, S395, and S397 each carry phosphoserine. The helical transmembrane segment at 416 to 439 (LGFIMAAFILCWIPYFIFFMVIAF) threads the bilayer. Residues 423-427 (FILCW) are important for agonist binding. Y430 lines the histamine pocket. Residues C440 and C443 are joined by a disulfide bond. Over 440–445 (CKSCCS) the chain is Extracellular. The chain crosses the membrane as a helical span at residues 446–468 (EPMHMFTIWLGYINSTLNPLIYP). The Cytoplasmic segment spans residues 469-486 (LCNENFKKTFKKILHIRS).

Belongs to the G-protein coupled receptor 1 family. Phosphorylation at sites in the second and third cytoplasmic loops independently contribute to agonist-induced receptor down-regulation.

It is found in the cell membrane. Its function is as follows. G-protein-coupled receptor for histamine, a biogenic amine that functions as an immune modulator and a neurotransmitter. Through the H1 receptor, histamine mediates the contraction of smooth muscles and increases capillary permeability due to contraction of terminal venules. Also mediates neurotransmission in the central nervous system and thereby regulates circadian rhythms, emotional and locomotor activities as well as cognitive functions. The polypeptide is Histamine H1 receptor (Rattus norvegicus (Rat)).